The primary structure comprises 121 residues: MILFSPKEIKDIEELVKEREGSVEEIEVIKLNETPNISQFLVFIKTSEVPHYHAEHDLTFTVLKGKGELYLEGEKKKLKEGDWAFIPKGAVHFYRNTSELSVLLAIFSPSYDGKDSVRVEL.

Positions 47-101 constitute a Cupin type-2 domain; it reads SEVPHYHAEHDLTFTVLKGKGELYLEGEKKKLKEGDWAFIPKGAVHFYRNTSELS.

This is an uncharacterized protein from Aquifex aeolicus (strain VF5).